Reading from the N-terminus, the 265-residue chain is Undecaprenyl-diphosphatase (265 aa).

7 helical membrane-spanning segments follow: residues 42–62, 82–102, 108–128, 143–163, 181–201, 221–241, and 248–264; these read AATFEVAIQLGAILAVVVLYW, GIMLLLLTSLPASVLGLAAHS, LFTPSTVAIALAVGAIFMLLV, MSPALALGIGCFQCLALWPGF, GLAAEYSFIAAVPIMFAATGY, GFVVSFLSAWAAVKLFIALVG, and FAWYRLAIAPLVYYFMA.

This sequence belongs to the UppP family.

It localises to the cell inner membrane. It carries out the reaction di-trans,octa-cis-undecaprenyl diphosphate + H2O = di-trans,octa-cis-undecaprenyl phosphate + phosphate + H(+). Functionally, catalyzes the dephosphorylation of undecaprenyl diphosphate (UPP). Confers resistance to bacitracin. This is Undecaprenyl-diphosphatase from Nitratidesulfovibrio vulgaris (strain DP4) (Desulfovibrio vulgaris).